The following is a 232-amino-acid chain: Small ribosomal subunit protein uS3 (232 aa).

The KH type-2 domain maps to 39-107; the sequence is IRKFLKKELF…DVAINIKEEK (69 aa). The tract at residues 213 to 232 is disordered; the sequence is QPEPAEEKKGGRRPSRKRGE. Residues 222–232 show a composition bias toward basic residues; the sequence is GGRRPSRKRGE.

Belongs to the universal ribosomal protein uS3 family. In terms of assembly, part of the 30S ribosomal subunit. Forms a tight complex with proteins S10 and S14.

Binds the lower part of the 30S subunit head. Binds mRNA in the 70S ribosome, positioning it for translation. In Sulfurovum sp. (strain NBC37-1), this protein is Small ribosomal subunit protein uS3.